A 499-amino-acid chain; its full sequence is Calcium/calmodulin-dependent protein kinase type II subunit delta (499 aa).

N-acetylalanine is present on alanine 2. One can recognise a Protein kinase domain in the interval 14-272 (YQLFEELGKG…ASEALKHPWI (259 aa)). Residues 20–28 (LGKGAFSVV) and lysine 43 contribute to the ATP site. Aspartate 136 serves as the catalytic Proton acceptor. The tract at residues 283 to 292 (HRQETVDCLK) is autoinhibitory domain. At threonine 287 the chain carries Phosphothreonine; by autocatalysis. A calmodulin-binding region spans residues 291 to 301 (LKKFNARRKLK). 2 positions are modified to phosphothreonine; by autocatalysis: threonine 306 and threonine 307. Phosphoserine is present on serine 315. Lysine 318 is modified (N6-acetyllysine). A phosphoserine mark is found at serine 319 and serine 330. Threonine 331 carries the post-translational modification Phosphothreonine. Serine 333 carries the phosphoserine modification. 2 positions are modified to phosphothreonine: threonine 336 and threonine 337. Phosphoserine is present on residues serine 404, serine 490, and serine 494.

Belongs to the protein kinase superfamily. CAMK Ser/Thr protein kinase family. CaMK subfamily. CAMK2 is composed of 4 different chains: alpha (CAMK2A), beta (CAMK2B), gamma (CAMK2G), and delta (CAMK2D). The different isoforms assemble into homo- or heteromultimeric holoenzymes composed of 12 subunits with two hexameric rings stacked one on top of the other. Interacts with RRAD and CACNB2. Post-translationally, autophosphorylation of Thr-287 following activation by Ca(2+)/calmodulin. Phosphorylation of Thr-287 locks the kinase into an activated state. In terms of tissue distribution, expressed in cardiac muscle and skeletal muscle. Isoform Delta 3, isoform Delta 2, isoform Delta 8 and isoform Delta 9 are expressed in cardiac muscle. Isoform Delta 11 is expressed in skeletal muscle.

It is found in the cell membrane. It localises to the sarcolemma. The protein localises to the sarcoplasmic reticulum membrane. It carries out the reaction L-seryl-[protein] + ATP = O-phospho-L-seryl-[protein] + ADP + H(+). It catalyses the reaction L-threonyl-[protein] + ATP = O-phospho-L-threonyl-[protein] + ADP + H(+). With respect to regulation, activated by Ca(2+)/calmodulin. Binding of calmodulin results in conformational change that relieves intrasteric autoinhibition and allows autophosphorylation of Thr-287 which turns the kinase in a constitutively active form and confers to the kinase a Ca(2+)-independent activity. Calcium/calmodulin-dependent protein kinase involved in the regulation of Ca(2+) homeostatis and excitation-contraction coupling (ECC) in heart by targeting ion channels, transporters and accessory proteins involved in Ca(2+) influx into the myocyte, Ca(2+) release from the sarcoplasmic reticulum (SR), SR Ca(2+) uptake and Na(+) and K(+) channel transport. Targets also transcription factors and signaling molecules to regulate heart function. In its activated form, is involved in the pathogenesis of dilated cardiomyopathy and heart failure. Contributes to cardiac decompensation and heart failure by regulating SR Ca(2+) release via direct phosphorylation of RYR2 Ca(2+) channel on 'Ser-2808'. In the nucleus, phosphorylates the MEF2 repressor HDAC4, promoting its nuclear export and binding to 14-3-3 protein, and expression of MEF2 and genes involved in the hypertrophic program. Is essential for left ventricular remodeling responses to myocardial infarction. In pathological myocardial remodeling acts downstream of the beta adrenergic receptor signaling cascade to regulate key proteins involved in ECC. Regulates Ca(2+) influx to myocytes by binding and phosphorylating the L-type Ca(2+) channel subunit beta-2 CACNB2. In addition to Ca(2+) channels, can target and regulate the cardiac sarcolemmal Na(+) channel Nav1.5/SCN5A and the K+ channel Kv4.3/KCND3, which contribute to arrhythmogenesis in heart failure. Phosphorylates phospholamban (PLN/PLB), an endogenous inhibitor of SERCA2A/ATP2A2, contributing to the enhancement of SR Ca(2+) uptake that may be important in frequency-dependent acceleration of relaxation (FDAR) and maintenance of contractile function during acidosis. May participate in the modulation of skeletal muscle function in response to exercise, by regulating SR Ca(2+) transport through phosphorylation of PLN/PLB and triadin, a ryanodine receptor-coupling factor. In response to interferon-gamma (IFN-gamma) stimulation, catalyzes phosphorylation of STAT1, stimulating the JAK-STAT signaling pathway. This is Calcium/calmodulin-dependent protein kinase type II subunit delta (CAMK2D) from Homo sapiens (Human).